We begin with the raw amino-acid sequence, 74 residues long: Protein DELETION OF SUV3 SUPPRESSOR 1(I) (74 aa).

Positions 35–74 (EKEEVKEVSQQWEDDWDDDDVNDDFSRQLRKELENGTDKK) are disordered. The span at 46–57 (WEDDWDDDDVND) shows a compositional bias: acidic residues. Over residues 58-74 (DFSRQLRKELENGTDKK) the composition is skewed to basic and acidic residues.

Belongs to the DSS1/SEM1 family. As to quaternary structure, part of the 26S proteasome. Interacts with BRCA2A and BRCA2B. Interacts with UCH1 and UCH2. Can form a tripartite complex with both RAD51 and BRCA2B or both DMC1 and BRCA2B.

Subunit of the 26S proteasome which plays a role in ubiquitin-dependent proteolysis. The polypeptide is Protein DELETION OF SUV3 SUPPRESSOR 1(I) (Arabidopsis thaliana (Mouse-ear cress)).